The following is a 75-amino-acid chain: DNA-directed RNA polymerase subunit epsilon (75 aa).

It belongs to the RNA polymerase subunit epsilon family. As to quaternary structure, RNAP is composed of a core of 2 alpha, a beta and a beta' subunit. The core is associated with a delta subunit, and at least one of epsilon or omega. When a sigma factor is associated with the core the holoenzyme is formed, which can initiate transcription.

The enzyme catalyses RNA(n) + a ribonucleoside 5'-triphosphate = RNA(n+1) + diphosphate. Its function is as follows. A non-essential component of RNA polymerase (RNAP). In Lactobacillus gasseri (strain ATCC 33323 / DSM 20243 / BCRC 14619 / CIP 102991 / JCM 1131 / KCTC 3163 / NCIMB 11718 / NCTC 13722 / AM63), this protein is DNA-directed RNA polymerase subunit epsilon.